The sequence spans 740 residues: Alpha-1,6-mannosylglycoprotein 6-beta-N-acetylglucosaminyltransferase A (740 aa).

Over M1–K13 the chain is Cytoplasmic. The helical; Signal-anchor for type II membrane protein transmembrane segment at L14 to L30 threads the bilayer. Topologically, residues H31–L740 are lumenal. 3 N-linked (GlcNAc...) asparagine glycosylation sites follow: N109, N114, and N117. Cystine bridges form between C144/C182, C155/C195, C171/C337, C371/C625, C648/C723, C652/C725, C659/C712, C680/C701, and C736/C739. Residues N212–L740 form a sufficient for catalytic activity region. N333 is a glycosylation site (N-linked (GlcNAc...) asparagine). D377–S378 is a binding site for substrate. N-linked (GlcNAc...) asparagine glycans are attached at residues N432 and N446. A UDP-N-acetyl-alpha-D-glucosamine-binding site is contributed by E525. K553 provides a ligand contact to substrate.

It belongs to the glycosyltransferase 18 family. Post-translationally, N-glycosylated. In terms of processing, a secreted form is released from the membrane after cleavage by gamma-secretase.

Its subcellular location is the golgi apparatus membrane. It is found in the secreted. It catalyses the reaction N(4)-{beta-D-GlcNAc-(1-&gt;2)-[beta-D-GlcNAc-(1-&gt;4)]-alpha-D-Man-(1-&gt;3)-[beta-D-GlcNAc-(1-&gt;2)-alpha-D-Man-(1-&gt;6)]-beta-D-Man-(1-&gt;4)-beta-D-GlcNAc-(1-&gt;4)-beta-D-GlcNAc}-L-asparaginyl-[protein] + UDP-N-acetyl-alpha-D-glucosamine = N(4)-{beta-D-GlcNAc-(1-&gt;2)-[beta-D-GlcNAc-(1-&gt;4)]-alpha-D-Man-(1-&gt;3)-[beta-D-GlcNAc-(1-&gt;2)-[beta-D-GlcNAc-(1-&gt;6)]-alpha-D-Man-(1-&gt;6)]-beta-D-Man-(1-&gt;4)-beta-D-GlcNAc-(1-&gt;4)-beta-D-GlcNAc}-L-asparaginyl-[protein] + UDP + H(+). Its pathway is protein modification; protein glycosylation. Functionally, catalyzes the addition of N-acetylglucosamine (GlcNAc) in beta 1-6 linkage to the alpha-linked mannose of biantennary N-linked oligosaccharides. Catalyzes an important step in the biosynthesis of branched, complex-type N-glycans, such as those found on EGFR, TGFR (TGF-beta receptor) and CDH2. Via its role in the biosynthesis of complex N-glycans, plays an important role in the activation of cellular signaling pathways, reorganization of the actin cytoskeleton, cell-cell adhesion and cell migration. MGAT5-dependent EGFR N-glycosylation enhances the interaction between EGFR and LGALS3 and thereby prevents rapid EGFR endocytosis and prolongs EGFR signaling. Required for efficient interaction between TGFB1 and its receptor. Enhances activation of intracellular signaling pathways by several types of growth factors, including FGF2, PDGF, IGF, TGFB1 and EGF. MGAT5-dependent CDH2 N-glycosylation inhibits CDH2-mediated homotypic cell-cell adhesion and contributes to the regulation of downstream signaling pathways. Promotes cell migration. Contributes to the regulation of the inflammatory response. MGAT5-dependent TCR N-glycosylation enhances the interaction between TCR and LGALS3, limits agonist-induced TCR clustering, and thereby dampens TCR-mediated responses to antigens. Required for normal leukocyte evasation and accumulation at sites of inflammation. Inhibits attachment of monocytes to the vascular endothelium and subsequent monocyte diapedesis. Its function is as follows. Promotes proliferation of umbilical vein endothelial cells and angiogenesis, at least in part by promoting the release of the growth factor FGF2 from the extracellular matrix. In Cricetulus griseus (Chinese hamster), this protein is Alpha-1,6-mannosylglycoprotein 6-beta-N-acetylglucosaminyltransferase A (MGAT5).